A 309-amino-acid chain; its full sequence is tRNA dimethylallyltransferase (309 aa).

Position 10–17 (10–17 (GPTAVGKT)) interacts with ATP. Substrate is bound at residue 12–17 (TAVGKT). Residues 35–38 (DSMQ) form an interaction with substrate tRNA region.

It belongs to the IPP transferase family. As to quaternary structure, monomer. Mg(2+) serves as cofactor.

It catalyses the reaction adenosine(37) in tRNA + dimethylallyl diphosphate = N(6)-dimethylallyladenosine(37) in tRNA + diphosphate. In terms of biological role, catalyzes the transfer of a dimethylallyl group onto the adenine at position 37 in tRNAs that read codons beginning with uridine, leading to the formation of N6-(dimethylallyl)adenosine (i(6)A). This chain is tRNA dimethylallyltransferase, found in Clostridium botulinum (strain Alaska E43 / Type E3).